The following is a 380-amino-acid chain: Type 4 apparatus protein DotM (380 aa).

The next 2 helical transmembrane spans lie at 18-38 (MAPV…WALA) and 99-119 (YPVI…NVTL).

As to quaternary structure, the T4BSS is a complex nanomachine composed of several subcomplexes. This subunit is part of the Type IV Coupling Complex (T4CC), a subcomplex composed of the DotLMNYZ core and the IcmSW-LvgA adapter subunits, linked by the C-terminal tail of DotL. Six DotLMNYZ hetero-pentameric units may assemble into a hexameric nanomachine, forming an inner membrane channel for effectors to pass through. Interacts directly with DotL.

Its subcellular location is the cell inner membrane. In terms of biological role, component of the Dot/Icm type IVB secretion system (T4BSS), which is used to inject bacterial effector proteins into eukaryotic host cells. Part of a subcomplex which recruits effector proteins and delivers them to the core transmembrane subcomplex. Forms the interacting surface for recruitment of acidic Glu-rich motif-containing effectors. The polypeptide is Type 4 apparatus protein DotM (Legionella pneumophila subsp. pneumophila (strain Philadelphia 1 / ATCC 33152 / DSM 7513)).